A 313-amino-acid polypeptide reads, in one-letter code: Beta-ketoacyl-[acyl-carrier-protein] synthase III (313 aa).

Active-site residues include cysteine 112 and histidine 238. The interval 239-243 is ACP-binding; the sequence is QANIR. Asparagine 268 is an active-site residue.

The protein belongs to the thiolase-like superfamily. FabH family. As to quaternary structure, homodimer.

Its subcellular location is the cytoplasm. It catalyses the reaction malonyl-[ACP] + acetyl-CoA + H(+) = 3-oxobutanoyl-[ACP] + CO2 + CoA. The protein operates within lipid metabolism; fatty acid biosynthesis. Functionally, catalyzes the condensation reaction of fatty acid synthesis by the addition to an acyl acceptor of two carbons from malonyl-ACP. Catalyzes the first condensation reaction which initiates fatty acid synthesis and may therefore play a role in governing the total rate of fatty acid production. Possesses both acetoacetyl-ACP synthase and acetyl transacylase activities. Its substrate specificity determines the biosynthesis of branched-chain and/or straight-chain of fatty acids. This Staphylococcus epidermidis (strain ATCC 35984 / DSM 28319 / BCRC 17069 / CCUG 31568 / BM 3577 / RP62A) protein is Beta-ketoacyl-[acyl-carrier-protein] synthase III.